The following is a 188-amino-acid chain: dCTP deaminase (188 aa).

Residues 111–116 (KSTYAR), 135–137 (TLE), Gln-156, Tyr-170, and Gln-180 contribute to the dCTP site. Catalysis depends on Glu-137, which acts as the Proton donor/acceptor.

The protein belongs to the dCTP deaminase family. Homotrimer.

The enzyme catalyses dCTP + H2O + H(+) = dUTP + NH4(+). The protein operates within pyrimidine metabolism; dUMP biosynthesis; dUMP from dCTP (dUTP route): step 1/2. Catalyzes the deamination of dCTP to dUTP. In Aromatoleum aromaticum (strain DSM 19018 / LMG 30748 / EbN1) (Azoarcus sp. (strain EbN1)), this protein is dCTP deaminase.